The sequence spans 261 residues: Acidic leucine-rich nuclear phosphoprotein 32 family member A (261 aa).

LRR repeat units lie at residues 16–37, 39–60, 61–83, and 84–105; these read QITELNLDNCRSTSIVGLTDEY, ALESLSLINVGLTTLKGFPKLP, NLKKLELSDNRISSGLNYLTTSP, and KLQYLNLSGNKIKDLETLKPLE. Residues 118 to 156 enclose the LRRCT domain; that stretch reads NDATQVDNYREKIFKMLPSLNFLDGFDCNDEEVQSDGDD. Composition is skewed to acidic residues over residues 145–185 and 194–229; these read CNDE…EEAN and YNDDLEEDNSDWEGEDEAGEEDEEEDSDIDDADGDA. Positions 145–261 are disordered; that stretch reads CNDEEVQSDG…VRGKKRKHDG (117 aa). Positions 238–252 are enriched in basic and acidic residues; it reads AKDKDGEKEADESQV.

Belongs to the ANP32 family. Phosphorylated on serine residues.

The protein resides in the nucleus. Its subcellular location is the cytoplasm. Functionally, implicated in a number of cellular processes, including proliferation, differentiation, caspase-dependent and caspase-independent apoptosis, suppression of transformation (tumor suppressor), inhibition of protein phosphatase 2A, regulation of mRNA trafficking and stability, and inhibition of acetyltransferases as part of the INHAT (inhibitor of histone acetyltransferases) complex. In Drosophila melanogaster (Fruit fly), this protein is Acidic leucine-rich nuclear phosphoprotein 32 family member A (Anp32a).